We begin with the raw amino-acid sequence, 41 residues long: Photosystem II reaction center protein Y (41 aa).

N-formylmethionine is present on M1. Residues 1–4 (MDWR) are Lumenal-facing. Residues 5 to 23 (VLVVLLPVLLAAGWAVRNI) traverse the membrane as a helical segment. The Cytoplasmic portion of the chain corresponds to 24 to 41 (LPYAVKQVQKLLQKAKAA).

Belongs to the PsbY family. PSII is composed of 1 copy each of membrane proteins PsbA, PsbB, PsbC, PsbD, PsbE, PsbF, PsbH, PsbI, PsbJ, PsbK, PsbL, PsbM, PsbT, PsbX, PsbY, PsbZ, Psb30/Ycf12, peripheral proteins PsbO, CyanoQ (PsbQ), PsbU, PsbV and a large number of cofactors. It forms dimeric complexes. This protein is only loosely associated with PSII, and is not often found in crystals. Found on the exterior of the PSII dimer, near cytochrome b559 (psbE and psbF). PSII binds multiple chlorophylls, carotenoids and specific lipids. serves as cofactor.

It localises to the cellular thylakoid membrane. In terms of biological role, loosely associated component of the core of photosystem II, it is not always seen in crystals. PSII is a light-driven water plastoquinone oxidoreductase, using light energy to abstract electrons from H(2)O, generating a proton gradient subsequently used for ATP formation. The chain is Photosystem II reaction center protein Y from Thermosynechococcus vestitus (strain NIES-2133 / IAM M-273 / BP-1).